Consider the following 514-residue polypeptide: Zinc finger CCCH-type with G patch domain-containing protein (514 aa).

The tract at residues 96–129 is disordered; sequence GEEPQPPGAGDGASTGSKDSEEEEEEEDGSSGMK. A compositionally biased stretch (acidic residues) spans 115–124; it reads SEEEEEEEDG. The C3H1-type zinc-finger motif lies at 171 to 197; sequence KAMKPCPFFLDGKCRFDDSCRFSHGQV. Disordered regions lie at residues 262-288, 363-422, and 494-514; these read IPPL…AAED, QQRK…AAER, and EEHS…MTEF. The span at 272–287 shows a compositional bias: acidic residues; sequence SSDDDDDDEEEDDAAE. The 59-residue stretch at 315–373 folds into the G-patch domain; sequence TRGIGSKLLARMGYEIGKGLGRNAEGRVEPIQAVLLPKGKSLDQCIEMQQRKKAGGKRE. Residues 365–383 show a composition bias toward basic residues; sequence RKKAGGKREHKAGKRRPRA.

It is found in the nucleus. In terms of biological role, transcription repressor that specifically binds the 5'-GGAG[GA]A[GA]A-3' consensus sequence. Represses transcription by recruiting the chromatin multiprotein complex NuRD to target promoters. Negatively regulates expression of EGFR, a gene involved in cell proliferation, survival and migration. This is Zinc finger CCCH-type with G patch domain-containing protein (zgpat) from Xenopus tropicalis (Western clawed frog).